A 225-amino-acid polypeptide reads, in one-letter code: Dimerizing cyclase tstC (225 aa).

Residues 1–19 (MRLSTLSSLLLGSSSIVFA) form the signal peptide. 3 N-linked (GlcNAc...) asparagine glycosylation sites follow: Asn-146, Asn-195, and Asn-217.

It belongs to the dimerizing cyclase tstC family.

The enzyme catalyses 2 [4-(deca-1,8-diyl)-2,5-dioxo-2,5-dihydro-3-furanyl]acetate + H(+) = 2-[(1R,8S,14R,15R)-11-hydroxy-14,15-bis[(6E)-oct-6-en-1-yl]-3,5,9-trioxo-4,10-dioxatetracyclo[9.4.0.0(2,6).0(8,12)]pentadeca-2(6),12-dien-8-yl]acetate + CO2. The protein operates within secondary metabolite biosynthesis. In terms of biological role, dimerizing cyclase; part of the gene cluster that mediates the biosynthesis of the antihypercholesterolemic agents phomoidrides which are dimeric anhydrides. Within the pathway, tstC produces the bicyclo[4.3.1]deca-1,6-diene core of phomoidrides via the dimerization of the monomeric anhydrides leading to prephomoidride. The pathway begins with the highly reducing polyketide synthase tstA that catalyzes the formation of a C12-fatty acyl-ACP, starting from one acetate and 5 malonate units. The hydrolase tstM is involved in the release of the C12-fatty acyl chain from phiA. The alkylcitrate synthase (ACS) tstJ and the alkylcitrate dehydratase (ACDH) tstI then give rise to decarboxylated monomeric anhydrides by coupling the C12-fatty acyl chain with oxalacetic acid. The cyclase tstC is responsible for the dimerization of the monomeric anhydrides which leads to the production of prephomoidride that contains the characteristic bicyclo[4.3.1]deca-1,6-diene system of phomoidrides. Iterative oxidation catalyzed by the alpha-ketoglutarate-dependent dioxygenase tstK produced then phomoidride A. Finally, the methyltransferase tstE converts phomoidride A to phomoidride B via an acetalization reaction. The phosphatidylethanolamine-binding protein tstB and tstN are not essential for dimerization and their functions have still to be determined. The protein is Dimerizing cyclase tstC of Talaromyces stipitatus (strain ATCC 10500 / CBS 375.48 / QM 6759 / NRRL 1006) (Penicillium stipitatum).